We begin with the raw amino-acid sequence, 533 residues long: Glucans biosynthesis protein D (533 aa).

The tat-type signal signal peptide spans 1-28 (MQRRHFLKNAAAALAALGLPALPPWALA).

The protein belongs to the OpgD/OpgG family. Post-translationally, predicted to be exported by the Tat system. The position of the signal peptide cleavage has not been experimentally proven.

The protein resides in the periplasm. The protein operates within glycan metabolism; osmoregulated periplasmic glucan (OPG) biosynthesis. In terms of biological role, probably involved in the control of the structural glucose backbone of osmoregulated periplasmic glucans (OPGs). The sequence is that of Glucans biosynthesis protein D from Xanthomonas campestris pv. campestris (strain 8004).